Consider the following 338-residue polypeptide: Glyceraldehyde-3-phosphate dehydrogenase, cytosolic (338 aa).

The segment at 2-153 is binding to NAD; sequence ADKKIKIGIN…YKSDLNIVSN (152 aa). Residues 15 to 16 and D37 contribute to the NAD(+) site; that span reads RI. An external loop region spans residues 56 to 75; sequence GQWKHNELKVKDEKTLLFGE. R84 provides a ligand contact to NAD(+). Positions 154 to 338 are catalytic; it reads ASCTTNCLAP…VDLIIHMSKA (185 aa). Residue 155-157 coordinates D-glyceraldehyde 3-phosphate; that stretch reads SCT. The Nucleophile role is filled by C156. Residues C156 and C160 each carry the S-nitrosocysteine modification. Positions 183-206 are S-loop; the sequence is HSITATQKTVDGPSMKDWRGGRAA. Residues T186, 215-216, and R238 each bind D-glyceraldehyde 3-phosphate; that span reads TG. N320 provides a ligand contact to NAD(+).

Belongs to the glyceraldehyde-3-phosphate dehydrogenase family. Homotetramer.

It localises to the cytoplasm. It carries out the reaction D-glyceraldehyde 3-phosphate + phosphate + NAD(+) = (2R)-3-phospho-glyceroyl phosphate + NADH + H(+). It functions in the pathway carbohydrate degradation; glycolysis; pyruvate from D-glyceraldehyde 3-phosphate: step 1/5. In terms of biological role, key enzyme in glycolysis that catalyzes the first step of the pathway by converting D-glyceraldehyde 3-phosphate (G3P) into 3-phospho-D-glyceroyl phosphate. Essential for the maintenance of cellular ATP levels and carbohydrate metabolism. This is Glyceraldehyde-3-phosphate dehydrogenase, cytosolic (GAPC) from Sinapis alba (White mustard).